Here is a 423-residue protein sequence, read N- to C-terminus: 5-hydroxytryptamine receptor 1A-alpha (423 aa).

Topologically, residues 1–47 are extracellular; the sequence is MDLRATSSNDSNATSGYSDTAAVDWDEGENATGSGSLPDPELSYQII. Asn-9, Asn-12, and Asn-30 each carry an N-linked (GlcNAc...) asparagine glycan. Residues 48–68 form a helical membrane-spanning segment; the sequence is TSLFLGALILCSIFGNSCVVA. Residues 69–82 lie on the Cytoplasmic side of the membrane; that stretch reads AIALERSLQNVANY. A helical membrane pass occupies residues 83-107; sequence LIGSLAVTDLMVSVLVLPMAALYQV. Over 108-116 the chain is Extracellular; sequence LNKWTLGQD. Residues 117 to 141 traverse the membrane as a helical segment; sequence ICDLFIALDVLCCTSSILHLCAIAL. A disulfide bridge connects residues Cys-118 and Cys-196. 2 residues coordinate serotonin: Asp-125 and Cys-129. The short motif at 142–144 is the DRY motif; important for ligand-induced conformation changes element; the sequence is DRY. The Cytoplasmic segment spans residues 142 to 161; the sequence is DRYWAITDPIDYVNKRTPRR. Residues 162 to 183 traverse the membrane as a helical segment; it reads AAVLISVTWLIGFSISIPPMLG. Residues 184-202 are Extracellular-facing; sequence WRSAEDRANPDACIISQDP. A helical membrane pass occupies residues 203 to 225; it reads GYTIYSTFGAFYIPLILMLVLYG. Topologically, residues 226-347 are cytoplasmic; the sequence is RIFKAARFRI…LARERKTVKT (122 aa). The interval 311–332 is disordered; sequence LPLPNTPQSSSHENINEKTTGT. Polar residues predominate over residues 316 to 329; it reads TPQSSSHENINEKT. Ser-320, Lys-346, Thr-347, and Gly-353 together coordinate 1D-myo-inositol 4-phosphate. The chain crosses the membrane as a helical span at residues 348–371; sequence LGIIMGTFIFCWLPFFIVALVLPF. At 372 to 379 the chain is on the extracellular side; the sequence is CAENCYMP. A helical transmembrane segment spans residues 380-404; it reads EWLGAVINWLGYSNSLLNPIIYAYF. Positions 397–401 match the NPxxY motif; important for ligand-induced conformation changes and signaling motif; that stretch reads NPIIY. 1D-myo-inositol 4-phosphate contacts are provided by Phe-404, Asn-405, and Lys-406. Residues 405-423 are Cytoplasmic-facing; that stretch reads NKDFQSAFKKILRCKFHRH.

This sequence belongs to the G-protein coupled receptor 1 family. 5-hydroxytryptamine receptor subfamily.

The protein localises to the cell membrane. With respect to regulation, G-protein coupled receptor activity is regulated by lipids: phosphatidylinositol 4-phosphate increases HTR1A-mediated activity. Functionally, G-protein coupled receptor for 5-hydroxytryptamine (serotonin). Also functions as a receptor for various drugs and psychoactive substances. Ligand binding causes a conformation change that triggers signaling via guanine nucleotide-binding proteins (G proteins) and modulates the activity of downstream effectors, such as adenylate cyclase. HTR1A is coupled to G(i)/G(o) G alpha proteins and mediates inhibitory neurotransmission: signaling inhibits adenylate cyclase activity and activates a phosphatidylinositol-calcium second messenger system that regulates the release of Ca(2+) ions from intracellular stores. Beta-arrestin family members regulate signaling by mediating both receptor desensitization and resensitization processes. This chain is 5-hydroxytryptamine receptor 1A-alpha (htr1aa), found in Takifugu rubripes (Japanese pufferfish).